The primary structure comprises 506 residues: NAD(P)H-quinone oxidoreductase subunit 2 (506 aa).

Helical transmembrane passes span 14 to 34 (AIIPEAFILLGIVGTLLVDLA), 42 to 62 (WAPIICYLSIGSSLVSLALQW), 79 to 99 (LAIAFRAIISLSTLISLLISW), 108 to 128 (PIGEFAAIVLSATLGAMLLCG), 132 to 152 (LISVFISLETLSVASYLLSGY), 167 to 187 (LLVGSAAAAVYLYGSSFLYGL), 206 to 226 (FITSLALVFVLSTVAFKIAAV), 240 to 260 (PTPVVAFLSVGSKTAGFAFAI), 276 to 296 (LLFTILAILSMALGNVVALAQ), 302 to 322 (MLAYSSIGQAGFVMIGIVSGT), 330 to 350 (VLYLAAYLFMNLGAFSCVILF), 374 to 394 (LGLSLCLLSLGGLPPMLGFFG), and 409 to 429 (LLVIVGLVTSVISIYYYISVI).

This sequence belongs to the complex I subunit 2 family. NDH-1 can be composed of about 15 different subunits; different subcomplexes with different compositions have been identified which probably have different functions.

It is found in the cellular thylakoid membrane. The catalysed reaction is a plastoquinone + NADH + (n+1) H(+)(in) = a plastoquinol + NAD(+) + n H(+)(out). It carries out the reaction a plastoquinone + NADPH + (n+1) H(+)(in) = a plastoquinol + NADP(+) + n H(+)(out). Functionally, NDH-1 shuttles electrons from an unknown electron donor, via FMN and iron-sulfur (Fe-S) centers, to quinones in the respiratory and/or the photosynthetic chain. The immediate electron acceptor for the enzyme in this species is believed to be plastoquinone. Couples the redox reaction to proton translocation, and thus conserves the redox energy in a proton gradient. Cyanobacterial NDH-1 also plays a role in inorganic carbon-concentration. The polypeptide is NAD(P)H-quinone oxidoreductase subunit 2 (Prochlorococcus marinus (strain AS9601)).